The sequence spans 233 residues: MTTVSVQIPAGWPATEERARAVQDELRARVVLDEPGPPPGTGRVTGVDVAYDDERDVVAAAAVVLDAGTLAVVAEATAVGRISFPYVPGLLAFREIPTVLAALEALPCPPGLVVCDGYGLAHPRRFGLASHLGVLTGLPTIGVAKNPFTFTHDDPDTPRGSTSPLLAGAEEVGRAVRTRDGVKPVFVSVGHRVGLGNACAHTLALTPAYRLPETTRRADALCRAALRDAAYRA.

The Mg(2+) site is built by D48 and D116.

Belongs to the endonuclease V family. The cofactor is Mg(2+).

It is found in the cytoplasm. It carries out the reaction Endonucleolytic cleavage at apurinic or apyrimidinic sites to products with a 5'-phosphate.. Functionally, DNA repair enzyme involved in the repair of deaminated bases. Selectively cleaves double-stranded DNA at the second phosphodiester bond 3' to a deoxyinosine leaving behind the intact lesion on the nicked DNA. This Streptomyces coelicolor (strain ATCC BAA-471 / A3(2) / M145) protein is Endonuclease V.